Consider the following 158-residue polypeptide: Regenerating islet-derived protein 4 (158 aa).

The signal sequence occupies residues 1-22; that stretch reads MASRSMRLLLLLSCLAKTGVLG. Cysteine 30 and cysteine 41 are disulfide-bonded. In terms of domain architecture, C-type lectin spans 37-155; that stretch reads HKSNCYGYFR…CNKRQHFLCK (119 aa). N-linked (GlcNAc...) asparagine glycosylation is present at asparagine 50. Intrachain disulfides connect cysteine 58/cysteine 154 and cysteine 129/cysteine 146. A carbohydrate-binding positions include 98–103 and 135–137; these read DPQKRQ and NNN.

Highly expressed in the gastrointestinal tract including the duodenum, jejunum, ileum, ileocecum, appendix, descending colon, pancreas and small intestine. Weakly expressed in normal colon and stomach. Strongly expressed in most colorectal tumors than in normal colon. Preferentially expressed in mucinous tumors and in some cases neuro-endocrine tumors. Expressed in mucus-secreting cells and enterocyte-like cells. In small intestine expressed at the basal perinuclear zone of goblet cells.

The protein localises to the secreted. Functionally, calcium-independent lectin displaying mannose-binding specificity and able to maintain carbohydrate recognition activity in an acidic environment. May be involved in inflammatory and metaplastic responses of the gastrointestinal epithelium. This Homo sapiens (Human) protein is Regenerating islet-derived protein 4 (REG4).